Here is a 412-residue protein sequence, read N- to C-terminus: Serine hydroxymethyltransferase (412 aa).

Residues L117 and 121–123 contribute to the (6S)-5,6,7,8-tetrahydrofolate site; that span reads GHL. An N6-(pyridoxal phosphate)lysine modification is found at K226. Residues E242 and 350-352 each bind (6S)-5,6,7,8-tetrahydrofolate; that span reads SPF.

Belongs to the SHMT family. As to quaternary structure, homodimer. Requires pyridoxal 5'-phosphate as cofactor.

Its subcellular location is the cytoplasm. It catalyses the reaction (6R)-5,10-methylene-5,6,7,8-tetrahydrofolate + glycine + H2O = (6S)-5,6,7,8-tetrahydrofolate + L-serine. Its pathway is one-carbon metabolism; tetrahydrofolate interconversion. It participates in amino-acid biosynthesis; glycine biosynthesis; glycine from L-serine: step 1/1. Catalyzes the reversible interconversion of serine and glycine with tetrahydrofolate (THF) serving as the one-carbon carrier. Appears to be specific for THF as the pteridine substrate, since the use of tetrahydromethanopterin (H4MPT) is much less efficient. Also exhibits THF-independent aldolase activity toward beta-hydroxyamino acids, producing glycine and aldehydes, via a retro-aldol mechanism. Thus, is able to catalyze the cleavage of L-allo-threonine and L-threo-beta-phenylserine. In Methanosarcina barkeri (strain Fusaro / DSM 804), this protein is Serine hydroxymethyltransferase.